Here is a 304-residue protein sequence, read N- to C-terminus: Putative S-adenosyl-L-methionine-dependent methyltransferase MAV_1058 (304 aa).

Residues aspartate 128 and 157-158 (DL) each bind S-adenosyl-L-methionine.

Belongs to the UPF0677 family.

Its function is as follows. Exhibits S-adenosyl-L-methionine-dependent methyltransferase activity. The chain is Putative S-adenosyl-L-methionine-dependent methyltransferase MAV_1058 from Mycobacterium avium (strain 104).